The chain runs to 247 residues: Putative methyltransferase GWCH70_2453 (247 aa).

The protein belongs to the methyltransferase superfamily.

Its function is as follows. May be a S-adenosyl-L-methionine (SAM)-dependent methyltransferase. The protein is Putative methyltransferase GWCH70_2453 of Geobacillus sp. (strain WCH70).